Consider the following 144-residue polypeptide: Large ribosomal subunit protein uL15 (144 aa).

The segment covering 1–13 (MVRERTKKLRGGH) has biased composition (basic residues). The disordered stretch occupies residues 1–32 (MVRERTKKLRGGHYGRGFKAGRGKGKKGGSGN).

Belongs to the universal ribosomal protein uL15 family. Part of the 50S ribosomal subunit.

Its function is as follows. Binds to the 23S rRNA. The polypeptide is Large ribosomal subunit protein uL15 (Thermoplasma acidophilum (strain ATCC 25905 / DSM 1728 / JCM 9062 / NBRC 15155 / AMRC-C165)).